A 423-amino-acid polypeptide reads, in one-letter code: MKAELIAVGTEILTGQITNTNAQFLSEKLAELGIDVYFHTAVGDNENRLLSVLDQSSKRSDLVILCGGLGPTEDDLTKQTLAKFLGKELIFDEEASKKLDSFFATRPKHTRTPNNERQAQIVEGAVPLQNLTGLAVGGIITVEGVTYVVLPGPPSELKPMVNQELIPALTENHTTLYSRVLRFFGVGESQLVTIIKDLIVNQTDPTIAPYAKVGEVTLRLSTKASSQEEADRKLDVLEEQIRSTKTLDGKSLSDLIYGYGESNSLAYEVFYLLKKYGKTITAAESLTAGLFQASVADFPGASQVFKGGFVTYSMEEKAKMLGIPLSKLEEHGVVSHFTAEKMAEGARVKTDSDYGIALTGVAGPDALEGHQAGTVFIGIADRNQVRSIKVVIGGRSRSDVRYISTLYAFNLVRQALLQEDNSI.

It belongs to the CinA family.

This Streptococcus thermophilus (strain ATCC BAA-491 / LMD-9) protein is Putative competence-damage inducible protein.